The primary structure comprises 85 residues: Turmerin (85 aa).

Post-translationally, the N-terminus is blocked.

Functionally, inhibition of trypsin. Has anticarcinogenic activity, prevents transformation of DMBA-treated JB6 cells. Has antipromoter activity, prevents promotion by tetradecanoyl phorbal acetate (TPA) in JB6 cells. Prevents tertiary butyl hydroperoxide-induced mutagenesis. Protects AT base pairs and shows antimutagenesis activity in TA102 and TA104 S.typhimurium mutagenesis tests. Inhibits paw edema formation induced by phospholipase A2 in Swiss Wistar mice. Prevents the release of arachidonate, the parent compound for the synthesis of prostaglandins and prostacyclins. Has antimalarial activity, kills P.falciparum. Has antivenom activity, nullifies the lethal effects of N.naja venom and inhibits phospholipase A2 present in N.naja venom. Has antifungal activity, inhibits cilia formation by A.niger. Is not toxic or allergenic. This Curcuma longa (Turmeric) protein is Turmerin.